Reading from the N-terminus, the 709-residue chain is Heme/hemopexin utilization protein C (709 aa).

The N-terminal stretch at 1-21 (MRFSKLSLAITTTLVTANALA) is a signal peptide. In terms of domain architecture, TBDR plug spans 36 to 147 (DPSRFTYTPQ…LGGVVAMRTP (112 aa)). The region spanning 158 to 709 (KFGVKIRQGY…NAKISAVYSF (552 aa)) is the TBDR beta-barrel domain. The TonB C-terminal box motif lies at 692 to 709 (SLMEGTGRNAKISAVYSF).

It belongs to the TonB-dependent receptor family.

The protein localises to the cell outer membrane. Required for utilization of free heme at low concentrations. This Haemophilus influenzae (strain 86-028NP) protein is Heme/hemopexin utilization protein C (hxuC).